Reading from the N-terminus, the 425-residue chain is Histone-binding protein RBBP4 (425 aa).

At Ala-2 the chain carries N-acetylalanine. An N6-acetyllysine; alternate modification is found at Lys-4. Lys-4 is covalently cross-linked (Glycyl lysine isopeptide (Lys-Gly) (interchain with G-Cter in SUMO2); alternate). Lys-4 is covalently cross-linked (Glycyl lysine isopeptide (Lys-Gly) (interchain with G-Cter in ubiquitin); alternate). WD repeat units lie at residues 32–125, 126–175, 176–223, 225–270, 271–314, 315–371, and 372–404; these read YDLV…NHEG, EVNR…RLRG, HQKE…KTIF, GHTA…HSVD, AHTA…HSFE, SHKD…FIHG, and GHTAKISDFSWNPNEPWVICSVSEDNIMQVWQM. Ser-110 is modified (phosphoserine). Lys-160 is subject to N6-acetyllysine; alternate. Lys-160 participates in a covalent cross-link: Glycyl lysine isopeptide (Lys-Gly) (interchain with G-Cter in SUMO2); alternate. Ser-355 is subject to Phosphoserine.

It belongs to the WD repeat RBAP46/RBAP48/MSI1 family. Binds directly to helix 1 of the histone fold of histone H4, a region that is not accessible when H4 is in chromatin. Subunit of the chromatin assembly factor 1 (CAF-1) complex, which is composed of RBBP4, CHAF1B and CHAF1A. Subunit of the core histone deacetylase (HDAC) complex, which is composed of HDAC1, HDAC2, RBBP4 and RBBP7. The core HDAC complex associates with SIN3A, ARID4B/SAP180, SAP18, SAP30, SAP130, SUDS3/SAP45 and possibly ARID4A/RBP1 and ING1 to form the SIN3 HDAC complex. Component of the nucleosome remodeling and deacetylase (NuRD) repressor complex, composed of core proteins MTA1, MTA2, MTA3, RBBP4, RBBP7, HDAC1, HDAC2, MBD2, MBD3, and peripherally associated proteins CDK2AP1, CDK2AP2, GATAD2A, GATAD2B, CHD3, CHD4 and CHD5. The exact stoichiometry of the NuRD complex is unknown, and some subunits such as MBD2 and MBD3, GATAD2A and GATAD2B, and CHD3, CHD4 and CHD5 define mutually exclusive NuRD complexes. Interacts with ZNF512B; the interaction is direct and may play a role in repressing gene expression. The NuRD complex may also interact with MBD3L1 and MBD3L2. Component of the PRC2 complex, which consists of the core subunits EED, EZH1 or EZH2, SUZ12, and RBBP4, and various combinations of accessory subunits including AEBP2, JARID2, PHF19, MTF2 and EPOP. Forms a monomeric PRC2.2 (class 2) complex consisting of at least SUZ12, RBBP4, AEBP2 and JARID2. Forms a dimeric PRC2.1 (class 1, PRC-PCL) complex consisting of at least SUZ12, RBBP4, and PHF19; PHF19 stabilizes the dimeric structure which enhances PRC2 interaction with chromatin. Component of the NURF-1 ISWI chromatin remodeling complex (also called the nucleosome-remodeling factor (NURF) complex) at least composed of SMARCA1 (isoform 2), BPTF, RBBP4 and RBBP7. Within the complex interacts with isoform 2 of SMARCA1. Component of the BPFT-SMARCA1 complex at least composed of SMARCA1 (isoform 1), BPFT, RBBP4 and RBBP7; the complex is catalytically inactive and does not remodel chromatin. Within the complex interacts with isoform 1 of SMARCA1. Interacts with the ISWI chromatin remodeling complex component SMARCA5; the interaction is direct. Interacts with the viral protein-binding domain of the retinoblastoma protein (RB1). Component of the DREAM complex (also named LINC complex) at least composed of E2F4, E2F5, LIN9, LIN37, LIN52, LIN54, MYBL1, MYBL2, RBL1, RBL2, RBBP4, TFDP1 and TFDP2. The complex exists in quiescent cells where it represses cell cycle-dependent genes. It dissociates in S phase when LIN9, LIN37, LIN52 and LIN54 form a subcomplex that binds to MYBL2. Found in a complex composed of at least SINHCAF, SIN3A, HDAC1, SAP30, RBBP4, OGT and TET1. Interacts with ZNF827; the interaction is direct and recruits RBBP4 to telomeres. Interacts with MTA1; the interaction is direct and mutually exclusive with binding histone H4. Interacts with ARMC12 (via ARM domains). Interacts with BRCA1. Interacts with CDK2AP1. Interacts with CREBBP, and this interaction may be enhanced by the binding of phosphorylated CREB1 to CREBBP. Interacts with ERCC6. Interacts with HDAC7. Interacts with PHF6. Interacts with PWWP2B. Interacts with SPEN/MINT. Interacts with SUV39H1.

The protein resides in the nucleus. The protein localises to the chromosome. It is found in the telomere. Its function is as follows. Core histone-binding subunit that may target chromatin assembly factors, chromatin remodeling factors and histone deacetylases to their histone substrates in a manner that is regulated by nucleosomal DNA. Component of the chromatin assembly factor 1 (CAF-1) complex, which is required for chromatin assembly following DNA replication and DNA repair. Component of the core histone deacetylase (HDAC) complex, which promotes histone deacetylation and consequent transcriptional repression. Component of the nucleosome remodeling and histone deacetylase complex (the NuRD complex), which promotes transcriptional repression by histone deacetylation and nucleosome remodeling. Component of the PRC2 complex, which promotes repression of homeotic genes during development. Component of the NURF (nucleosome remodeling factor) complex. This chain is Histone-binding protein RBBP4 (RBBP4), found in Bos taurus (Bovine).